A 265-amino-acid chain; its full sequence is Acrosomal protein SP-10 (265 aa).

Positions 1 to 21 are cleaved as a signal peptide; the sequence is MNRFLLLMSLYLLGSARGTSS. The tract at residues 62–181 is disordered; that stretch reads LNTLSEHGSS…EQASGAPISS (120 aa). 16 tandem repeats follow at residues 66–70, 71–75, 85–88, 91–95, 110–114, 115–119, 120–123, 125–129, 135–139, 140–144, 145–148, 150–154, 155–159, 160–164, 165–168, and 170–174. The segment at 66–95 is 3 X 5 AA repeats of S-E-H-[GA]-S; it reads SEHGSSEHGSSKHTVAEHTSGEHAESEHAS. Residues 69-110 show a composition bias toward basic and acidic residues; it reads GSSEHGSSKHTVAEHTSGEHAESEHASGEPAATEHAEGEHTV. Residues 85–168 are 4 X 4 AA repeats of S-G-E-H; it reads SGEHAESEHA…ASGEQPSGEH (84 aa). The 9 X 5 AA repeats of [SV]-G-E-Q-[PSA] stretch occupies residues 110–174; it reads VGEQPSGEQP…SGEHASGEQA (65 aa). Over residues 152-163 the composition is skewed to polar residues; that stretch reads EQPSGEQASGEQ. Asparagine 258 is a glycosylation site (N-linked (GlcNAc...) asparagine).

Testis.

The protein localises to the cytoplasmic vesicle. Its subcellular location is the secretory vesicle. It is found in the acrosome. The protein is Acrosomal protein SP-10 (ACRV1) of Homo sapiens (Human).